Here is a 369-residue protein sequence, read N- to C-terminus: UPF0284 protein AM1_5137 (369 aa).

It belongs to the UPF0284 family.

The chain is UPF0284 protein AM1_5137 from Acaryochloris marina (strain MBIC 11017).